The chain runs to 116 residues: Large ribosomal subunit protein bL17 (116 aa).

It belongs to the bacterial ribosomal protein bL17 family. In terms of assembly, part of the 50S ribosomal subunit. Contacts protein L32.

This Wolinella succinogenes (strain ATCC 29543 / DSM 1740 / CCUG 13145 / JCM 31913 / LMG 7466 / NCTC 11488 / FDC 602W) (Vibrio succinogenes) protein is Large ribosomal subunit protein bL17.